Here is a 72-residue protein sequence, read N- to C-terminus: Translation initiation factor IF-1 2 (72 aa).

The S1-like domain maps to 1–72 (MAKEELIEFE…TKGRINYRHK (72 aa)).

The protein belongs to the IF-1 family. Component of the 30S ribosomal translation pre-initiation complex which assembles on the 30S ribosome in the order IF-2 and IF-3, IF-1 and N-formylmethionyl-tRNA(fMet); mRNA recruitment can occur at any time during PIC assembly.

It is found in the cytoplasm. Functionally, one of the essential components for the initiation of protein synthesis. Stabilizes the binding of IF-2 and IF-3 on the 30S subunit to which N-formylmethionyl-tRNA(fMet) subsequently binds. Helps modulate mRNA selection, yielding the 30S pre-initiation complex (PIC). Upon addition of the 50S ribosomal subunit IF-1, IF-2 and IF-3 are released leaving the mature 70S translation initiation complex. The sequence is that of Translation initiation factor IF-1 2 from Ralstonia nicotianae (strain ATCC BAA-1114 / GMI1000) (Ralstonia solanacearum).